Here is a 1382-residue protein sequence, read N- to C-terminus: DNA-directed RNA polymerase subunit beta (1382 aa).

It belongs to the RNA polymerase beta chain family. The RNAP catalytic core consists of 2 alpha, 1 beta, 1 beta' and 1 omega subunit. When a sigma factor is associated with the core the holoenzyme is formed, which can initiate transcription.

It carries out the reaction RNA(n) + a ribonucleoside 5'-triphosphate = RNA(n+1) + diphosphate. Its function is as follows. DNA-dependent RNA polymerase catalyzes the transcription of DNA into RNA using the four ribonucleoside triphosphates as substrates. The sequence is that of DNA-directed RNA polymerase subunit beta from Aliarcobacter butzleri (strain RM4018) (Arcobacter butzleri).